Consider the following 320-residue polypeptide: Methionyl-tRNA formyltransferase (320 aa).

Residue 111-114 (SLLP) coordinates (6S)-5,6,7,8-tetrahydrofolate.

The protein belongs to the Fmt family.

It carries out the reaction L-methionyl-tRNA(fMet) + (6R)-10-formyltetrahydrofolate = N-formyl-L-methionyl-tRNA(fMet) + (6S)-5,6,7,8-tetrahydrofolate + H(+). Functionally, attaches a formyl group to the free amino group of methionyl-tRNA(fMet). The formyl group appears to play a dual role in the initiator identity of N-formylmethionyl-tRNA by promoting its recognition by IF2 and preventing the misappropriation of this tRNA by the elongation apparatus. This chain is Methionyl-tRNA formyltransferase, found in Methylacidiphilum infernorum (isolate V4) (Methylokorus infernorum (strain V4)).